A 568-amino-acid chain; its full sequence is MGGIMAPKDIMTNTHAKSILNSMNSLRKSNTLCDVTLRVEQKDFPAHRIVLAACSDYFCAMFTSELSEKGKPYVDIQGLTASTMEILLDFVYTETVHVTVENVQELLPAACLLQLKGVKQACCEFLESQLDPSNCLGIRDFAETHNCVDLMQAAEVFSQKHFPEVVQHEEFILLSQGEVEKLIKCDEIQVDSEEPVFEAVINWVKHAKKEREESLPDLLQYVRMPLLTPRYITDVIDAEPFIRCSLQCRDLVDEAKKFHLRPELRSQMQGPRTRARLGDNEVLLVVGGFGSQQSPIDVVEKYDPKTQEWSFLPSITRKRRYVASVSLHDRIYVIGGYDGRSRLSSVECLDYTADEDGVWYSVAPMNVRRGLAGATTLGDMIYVSGGFDGSRRHTSMERYDPNIDQWSMLGDMQTAREGAGLVVASGIIYCLGGYDGLNILNSVEKYDPHTGHWTNVTPMATKRSGAGVALLNDHIYVVGGFDGTAHLSSVEAYNIRTDSWTTVTSMTTPRCYVGATVLRGRLYAIAGYDGNSLLSSIECYDPIIDSWEVVASMGTQRCDAGVCVLREK.

Positions 33 to 100 (CDVTLRVEQK…VYTETVHVTV (68 aa)) constitute a BTB domain. The region spanning 135–236 (CLGIRDFAET…LTPRYITDVI (102 aa)) is the BACK domain. Kelch repeat units lie at residues 282-329 (VLLV…SLHD), 331-379 (IYVI…TLGD), 380-426 (MIYV…VASG), 427-473 (IIYC…LLND), 475-520 (IYVV…VLRG), and 522-567 (LYAI…VLRE). The interaction with DVL3 stretch occupies residues 405–568 (QWSMLGDMQT…DAGVCVLREK (164 aa)).

As to quaternary structure, component of the BCR(KLHL12) E3 ubiquitin ligase complex, at least composed of CUL3 and KLHL12 and RBX1. This complex interacts with DVL3 upon activation of the Wnt signaling pathway by WNT3A. Interacts with DRD4, KLHL2 and SEC31A. Interacts with PEF1 and PDCD6/ALG-2; interaction takes place in response to cytosolic calcium increase and leads to bridge together the BCR(KLHL12) complex and SEC31 (SEC31A or SEC31B). In terms of processing, ubiquitinated by the SCF(FBXL17) complex, leading to its degradation by the proteasome: ubiquitination by the SCF(FBXL17) complex takes place when aberrant BTB domain dimers are formed.

The protein localises to the cytoplasmic vesicle. It localises to the COPII-coated vesicle. It functions in the pathway protein modification; protein ubiquitination. Substrate-specific adapter of a BCR (BTB-CUL3-RBX1) E3 ubiquitin ligase complex that acts as a negative regulator of Wnt signaling pathway and ER-Golgi transport. The BCR(KLHL12) complex is involved in ER-Golgi transport by regulating the size of COPII coats, thereby playing a key role in collagen export, which is required for embryonic stem (ES) cells division: BCR(KLHL12) acts by mediating monoubiquitination of SEC31 (SEC31A or SEC31B). The BCR(KLHL12) complex is also involved in neural crest specification: in response to cytosolic calcium increase, interacts with the heterodimer formed with PEF1 and PDCD6/ALG-2, leading to bridge together the BCR(KLHL12) complex and SEC31 (SEC31A or SEC31B), promoting monoubiquitination of SEC31 and subsequent collagen export. As part of the BCR(KLHL12) complex, also acts as a negative regulator of the Wnt signaling pathway by mediating ubiquitination and subsequent proteolysis of DVL3. The BCR(KLHL12) complex also mediates polyubiquitination of DRD4 and PEF1, without leading to degradation of these proteins. In Rattus norvegicus (Rat), this protein is Kelch-like protein 12 (Klhl12).